A 225-amino-acid chain; its full sequence is Uracil-DNA glycosylase (225 aa).

Residue Asp-65 is the Proton acceptor of the active site.

This sequence belongs to the uracil-DNA glycosylase (UDG) superfamily. UNG family.

The protein localises to the cytoplasm. It catalyses the reaction Hydrolyzes single-stranded DNA or mismatched double-stranded DNA and polynucleotides, releasing free uracil.. Functionally, excises uracil residues from the DNA which can arise as a result of misincorporation of dUMP residues by DNA polymerase or due to deamination of cytosine. This is Uracil-DNA glycosylase from Clostridium perfringens (strain ATCC 13124 / DSM 756 / JCM 1290 / NCIMB 6125 / NCTC 8237 / Type A).